A 136-amino-acid polypeptide reads, in one-letter code: Small integral membrane protein 23 (136 aa).

Over 1-31 (MTIQKTGCRGREAAEVVEQRRRSHHCDDRKQ) the chain is Cytoplasmic. A helical; Signal-anchor for type II membrane protein transmembrane segment spans residues 32–52 (TLLALLILVLYLGMGISGSSW). Over 53 to 136 (EVSGQTKDCN…DLRPEDPCFT (84 aa)) the chain is Extracellular. Residues 92–124 (LKINLHGFLEKLEKEVRELEQLVRDLEFWLDAL) are a coiled coil.

Its subcellular location is the membrane. The chain is Small integral membrane protein 23 (Smim23) from Mus musculus (Mouse).